A 294-amino-acid chain; its full sequence is Metallophosphoesterase MPPED2 (294 aa).

Residues D65, H67, D86, N117, and H213 each contribute to the Mn(2+) site. Position 117 to 118 (117 to 118 (NH)) interacts with GMP. Residues 225–226 (KE) and 252–255 (GIHE) contribute to the GMP site. H254 serves as a coordination point for Mn(2+).

The protein belongs to the UPF0046 family. In terms of assembly, homodimer. Mn(2+) serves as cofactor. It depends on Co(2+) as a cofactor. Expressed predominantly in fetal brain.

With respect to regulation, inhibited by nmolar levels of AMP and GMP. Displays low metallophosphoesterase activity (in vitro). May play a role in the development of the nervous system. The chain is Metallophosphoesterase MPPED2 (MPPED2) from Homo sapiens (Human).